The sequence spans 147 residues: Hemoglobin subunit deltaH (147 aa).

A Globin domain is found at 3-147 (RLTDSEKAEV…MANALAHKYH (145 aa)). His64 and His93 together coordinate heme b.

Belongs to the globin family. In terms of assembly, heterotetramer of two delta chains and two alpha chains. Red blood cells.

The chain is Hemoglobin subunit deltaH (HBD) from Dendrohyrax dorsalis (Beecroft's tree hyrax).